The chain runs to 363 residues: Putative agmatine deiminase 1 (363 aa).

C356 serves as the catalytic Amidino-cysteine intermediate.

Belongs to the agmatine deiminase family.

It carries out the reaction agmatine + H2O = N-carbamoylputrescine + NH4(+). The protein is Putative agmatine deiminase 1 of Listeria monocytogenes serovar 1/2a (strain ATCC BAA-679 / EGD-e).